The primary structure comprises 215 residues: Probable GTP-binding protein EngB (215 aa).

The 175-residue stretch at glutamate 30 to leucine 204 folds into the EngB-type G domain. Residues glycine 38–serine 45, glycine 64–leucine 68, aspartate 82–glycine 85, threonine 149–aspartate 152, and leucine 182–alanine 185 each bind GTP. Serine 45 and threonine 66 together coordinate Mg(2+).

Belongs to the TRAFAC class TrmE-Era-EngA-EngB-Septin-like GTPase superfamily. EngB GTPase family. It depends on Mg(2+) as a cofactor.

Its function is as follows. Necessary for normal cell division and for the maintenance of normal septation. In Pseudomonas paraeruginosa (strain DSM 24068 / PA7) (Pseudomonas aeruginosa (strain PA7)), this protein is Probable GTP-binding protein EngB.